The primary structure comprises 200 residues: Holliday junction branch migration complex subunit RuvA (200 aa).

The domain I stretch occupies residues 1–63 (MYAYIKGTLS…EDAQLLYGFI (63 aa)). The domain II stretch occupies residues 64-142 (NEEEKEMFLS…ITEENSDDLL (79 aa)). The interval 143 to 149 (QTQVNGN) is flexible linker. Residues 150 to 200 (EQNQIISEALLALQALGYSKRELTKVEKSLNKHNVNSVDEAVKIGLQTLVS) are domain III.

The protein belongs to the RuvA family. As to quaternary structure, homotetramer. Forms an RuvA(8)-RuvB(12)-Holliday junction (HJ) complex. HJ DNA is sandwiched between 2 RuvA tetramers; dsDNA enters through RuvA and exits via RuvB. An RuvB hexamer assembles on each DNA strand where it exits the tetramer. Each RuvB hexamer is contacted by two RuvA subunits (via domain III) on 2 adjacent RuvB subunits; this complex drives branch migration. In the full resolvosome a probable DNA-RuvA(4)-RuvB(12)-RuvC(2) complex forms which resolves the HJ.

The protein resides in the cytoplasm. In terms of biological role, the RuvA-RuvB-RuvC complex processes Holliday junction (HJ) DNA during genetic recombination and DNA repair, while the RuvA-RuvB complex plays an important role in the rescue of blocked DNA replication forks via replication fork reversal (RFR). RuvA specifically binds to HJ cruciform DNA, conferring on it an open structure. The RuvB hexamer acts as an ATP-dependent pump, pulling dsDNA into and through the RuvAB complex. HJ branch migration allows RuvC to scan DNA until it finds its consensus sequence, where it cleaves and resolves the cruciform DNA. This Staphylococcus epidermidis (strain ATCC 35984 / DSM 28319 / BCRC 17069 / CCUG 31568 / BM 3577 / RP62A) protein is Holliday junction branch migration complex subunit RuvA.